The chain runs to 78 residues: MQSQESGVHYSRWDSSSRDEVSMTAMSSSEEASCYRRISQKLCSGKLGIAMKVLGGVALFWIIFILGYITGYYVHKCK.

Met1 is modified (N-acetylmethionine). The segment at 1 to 22 (MQSQESGVHYSRWDSSSRDEVS) is disordered. Topologically, residues 1–48 (MQSQESGVHYSRWDSSSRDEVSMTAMSSSEEASCYRRISQKLCSGKLG) are cytoplasmic. Phosphoserine is present on residues Ser6, Ser17, Ser22, and Ser27. A compositionally biased stretch (basic and acidic residues) spans 11–21 (SRWDSSSRDEV). Residues 49-69 (IAMKVLGGVALFWIIFILGYI) form a helical; Signal-anchor for type II membrane protein membrane-spanning segment. Residues 70–78 (TGYYVHKCK) lie on the Extracellular side of the membrane.

Belongs to the SMIM1 family. In terms of assembly, homooligomer; disulfide-linked.

It is found in the cell membrane. Its function is as follows. Regulator of red blood cell formation. The protein is Small integral membrane protein 1 of Mus musculus (Mouse).